Here is a 308-residue protein sequence, read N- to C-terminus: Glutamyl-Q tRNA(Asp) synthetase (308 aa).

Residues R19–S23 and E55 contribute to the L-glutamate site. The short motif at P22–S32 is the 'HIGH' region element. Positions 111, 113, 125, and 129 each coordinate Zn(2+). Positions 182 and 200 each coordinate L-glutamate. Residues K238–Q242 carry the 'KMSKS' region motif. K241 provides a ligand contact to ATP.

Belongs to the class-I aminoacyl-tRNA synthetase family. GluQ subfamily. Requires Zn(2+) as cofactor.

In terms of biological role, catalyzes the tRNA-independent activation of glutamate in presence of ATP and the subsequent transfer of glutamate onto a tRNA(Asp). Glutamate is transferred on the 2-amino-5-(4,5-dihydroxy-2-cyclopenten-1-yl) moiety of the queuosine in the wobble position of the QUC anticodon. This Escherichia coli O157:H7 protein is Glutamyl-Q tRNA(Asp) synthetase.